Reading from the N-terminus, the 381-residue chain is Lipid-A-disaccharide synthase (381 aa).

Belongs to the LpxB family.

It carries out the reaction a lipid X + a UDP-2-N,3-O-bis[(3R)-3-hydroxyacyl]-alpha-D-glucosamine = a lipid A disaccharide + UDP + H(+). It functions in the pathway bacterial outer membrane biogenesis; LPS lipid A biosynthesis. Its function is as follows. Condensation of UDP-2,3-diacylglucosamine and 2,3-diacylglucosamine-1-phosphate to form lipid A disaccharide, a precursor of lipid A, a phosphorylated glycolipid that anchors the lipopolysaccharide to the outer membrane of the cell. The chain is Lipid-A-disaccharide synthase from Psychromonas ingrahamii (strain DSM 17664 / CCUG 51855 / 37).